Here is a 179-residue protein sequence, read N- to C-terminus: Replication restart protein DnaT (179 aa).

The tract at residues 156–179 (GGLPKRDVNTVSEPDSQIPPGFRG) is disordered.

It belongs to the DnaT family. Homooligomerizes. Interacts with PriB. Component of the replication restart primosome. Primosome assembly occurs via a 'hand-off' mechanism. PriA binds to replication forks, subsequently PriB then DnaT bind; DnaT then displaces ssDNA to generate the helicase loading substrate.

In terms of biological role, involved in the restart of stalled replication forks, which reloads the replicative helicase on sites other than the origin of replication. Can function in multiple replication restart pathways. Displaces ssDNA from a PriB-ssDNA complex. Probably forms a spiral filament on ssDNA. The sequence is that of Replication restart protein DnaT from Escherichia coli O81 (strain ED1a).